Here is a 360-residue protein sequence, read N- to C-terminus: Probable protein phosphatase 2C 54 (360 aa).

Positions 1 to 39 are disordered; the sequence is MCVEESEGAERLDFGEPAAAAADAGKSKSKSPDELPSPR. Positions 65 to 325 constitute a PPM-type phosphatase domain; it reads RSGDWSDIGG…DNLTAVLVSF (261 aa). Positions 109, 110, 273, and 316 each coordinate Mn(2+).

The protein belongs to the PP2C family. Mg(2+) serves as cofactor. The cofactor is Mn(2+).

It catalyses the reaction O-phospho-L-seryl-[protein] + H2O = L-seryl-[protein] + phosphate. The enzyme catalyses O-phospho-L-threonyl-[protein] + H2O = L-threonyl-[protein] + phosphate. In Oryza sativa subsp. japonica (Rice), this protein is Probable protein phosphatase 2C 54.